The following is a 633-amino-acid chain: Biosynthetic arginine decarboxylase (633 aa).

K101 is subject to N6-(pyridoxal phosphate)lysine. 284–294 provides a ligand contact to substrate; the sequence is VDVGGGLGVDY.

It belongs to the Orn/Lys/Arg decarboxylase class-II family. SpeA subfamily. Mg(2+) is required as a cofactor. Pyridoxal 5'-phosphate serves as cofactor.

It catalyses the reaction L-arginine + H(+) = agmatine + CO2. Its pathway is amine and polyamine biosynthesis; agmatine biosynthesis; agmatine from L-arginine: step 1/1. Functionally, catalyzes the biosynthesis of agmatine from arginine. This is Biosynthetic arginine decarboxylase from Aeromonas salmonicida (strain A449).